The following is a 66-amino-acid chain: MDFTTLIIIGVYLLVFIVYFAKINTSVCTISISGASIEISGCDNPTLFEILPKLRPFNHGLSLPSN.

Residues 1–2 (MD) are Lumenal-facing. Residues 3 to 23 (FTTLIIIGVYLLVFIVYFAKI) form a helical membrane-spanning segment. Residues 24 to 66 (NTSVCTISISGASIEISGCDNPTLFEILPKLRPFNHGLSLPSN) are Cytoplasmic-facing.

The protein belongs to the Tymovirales TGBp3 protein family.

It is found in the host endoplasmic reticulum membrane. Functionally, plays a role in viral cell-to-cell propagation, by facilitating genome transport to neighboring plant cells through plasmosdesmata. May induce the formation of granular vesicles derived from the Endoplasmic reticulum, which align on actin filaments. The polypeptide is Movement protein TGBp3 (Trifolium (WCMV)).